The sequence spans 556 residues: Glucose-6-phosphate isomerase (556 aa).

Glutamate 364 functions as the Proton donor in the catalytic mechanism. Residues histidine 395 and lysine 521 contribute to the active site.

Belongs to the GPI family.

The protein localises to the cytoplasm. The enzyme catalyses alpha-D-glucose 6-phosphate = beta-D-fructose 6-phosphate. Its pathway is carbohydrate biosynthesis; gluconeogenesis. It functions in the pathway carbohydrate degradation; glycolysis; D-glyceraldehyde 3-phosphate and glycerone phosphate from D-glucose: step 2/4. Catalyzes the reversible isomerization of glucose-6-phosphate to fructose-6-phosphate. The polypeptide is Glucose-6-phosphate isomerase (Corynebacterium kroppenstedtii (strain DSM 44385 / JCM 11950 / CIP 105744 / CCUG 35717)).